The following is a 347-amino-acid chain: GMP reductase (347 aa).

An NADP(+)-binding site is contributed by 108-131; it reads ADFQKTKDIMALTDDLIFICIDIA. 2 residues coordinate K(+): Gly181 and Gly183. Cys186 (thioimidate intermediate) is an active-site residue. An NADP(+)-binding site is contributed by 216–239; that stretch reads IIGDGGCSCAGDVSKAFGGGADFV.

This sequence belongs to the IMPDH/GMPR family. GuaC type 1 subfamily. As to quaternary structure, homotetramer.

It catalyses the reaction IMP + NH4(+) + NADP(+) = GMP + NADPH + 2 H(+). Catalyzes the irreversible NADPH-dependent deamination of GMP to IMP. It functions in the conversion of nucleobase, nucleoside and nucleotide derivatives of G to A nucleotides, and in maintaining the intracellular balance of A and G nucleotides. The chain is GMP reductase from Aliivibrio fischeri (strain MJ11) (Vibrio fischeri).